The primary structure comprises 70 residues: Small ribosomal subunit protein bS21 (70 aa).

It belongs to the bacterial ribosomal protein bS21 family.

The polypeptide is Small ribosomal subunit protein bS21 (Methylibium petroleiphilum (strain ATCC BAA-1232 / LMG 22953 / PM1)).